The sequence spans 241 residues: Probable transcriptional regulatory protein H16_A0916 (241 aa).

This sequence belongs to the TACO1 family.

It is found in the cytoplasm. The chain is Probable transcriptional regulatory protein H16_A0916 from Cupriavidus necator (strain ATCC 17699 / DSM 428 / KCTC 22496 / NCIMB 10442 / H16 / Stanier 337) (Ralstonia eutropha).